The chain runs to 97 residues: Co-chaperonin GroES (97 aa).

It belongs to the GroES chaperonin family. In terms of assembly, heptamer of 7 subunits arranged in a ring. Interacts with the chaperonin GroEL.

The protein resides in the cytoplasm. Together with the chaperonin GroEL, plays an essential role in assisting protein folding. The GroEL-GroES system forms a nano-cage that allows encapsulation of the non-native substrate proteins and provides a physical environment optimized to promote and accelerate protein folding. GroES binds to the apical surface of the GroEL ring, thereby capping the opening of the GroEL channel. The chain is Co-chaperonin GroES from Photorhabdus laumondii subsp. laumondii (strain DSM 15139 / CIP 105565 / TT01) (Photorhabdus luminescens subsp. laumondii).